The primary structure comprises 800 residues: Nucleolar complex protein 3 homolog (800 aa).

2 disordered regions span residues K27–D93 and G160–E187. Over residues K40–Q51 the composition is skewed to basic residues. The span at N66 to R78 shows a compositional bias: basic and acidic residues. The span at E79 to D93 shows a compositional bias: acidic residues. Over residues G160–N174 the composition is skewed to basic and acidic residues. A compositionally biased stretch (acidic residues) spans K175–E187. K333 participates in a covalent cross-link: Glycyl lysine isopeptide (Lys-Gly) (interchain with G-Cter in SUMO2). The stretch at K451 to L490 forms a coiled coil. S787 is modified (phosphoserine).

The protein belongs to the CBF/MAK21 family. Expressed in colon, heart, kidney, liver, lung, placenta, skeletal muscle, small intestine, spleen and thymus.

It localises to the nucleus. The protein resides in the nucleolus. The protein localises to the nucleus speckle. Its function is as follows. May be required for adipogenesis. In Homo sapiens (Human), this protein is Nucleolar complex protein 3 homolog (NOC3L).